Here is a 132-residue protein sequence, read N- to C-terminus: RuBisCO chaperone RbcX (132 aa).

The tract at residues 110–132 is disordered; the sequence is HLSLSNPSPESEQQTISDTDWDH. A compositionally biased stretch (polar residues) spans 111–132; that stretch reads LSLSNPSPESEQQTISDTDWDH.

The protein belongs to the RbcX family. As to quaternary structure, homodimer. Interacts with the exposed C-terminal peptide of RbcL via its central cleft, contacts a second RbcL monomer via its peripheral polar surface. RbcX and Raf1 can bind simultaneously to RbcL.

It is found in the carboxysome. The protein resides in the cytoplasm. Functionally, an RbcL-specific chaperone. The central cleft of the RbcX homodimer (RbcX2) binds the C-terminus of an RbcL monomer, stabilizing the C-terminus and probably preventing its reassociation with chaperonin GroEL-ES. At the same time the peripheral region of RbcX2 binds a second RbcL monomer, bridging the RbcL homodimers in the correct orientation. The RbcX2(2)-bound RbcL dimers then assemble into the RbcL8 core (RbcL8-(RbcX2)8). RbcS binding triggers the release of RbcX2. Its function is as follows. When rbcL-rbcX-rbcS or rbcL-rbcS were overexpressed in E.coli no change in reconstituted RuBisCO activity was observed, which suggests RbcX plays no role in RuBisCO assembly in this system. However in PubMed:8472962 E.coli chaperones groL and groS were also overexpressed, which may compensate for lack of rbcX. This chain is RuBisCO chaperone RbcX, found in Nostoc sp. (strain PCC 7120 / SAG 25.82 / UTEX 2576).